A 269-amino-acid polypeptide reads, in one-letter code: Hydroxyethylthiazole kinase (269 aa).

Residue Met41 participates in substrate binding. ATP is bound by residues Arg117 and Ser163. Gly190 contributes to the substrate binding site.

The protein belongs to the Thz kinase family. Mg(2+) serves as cofactor.

It carries out the reaction 5-(2-hydroxyethyl)-4-methylthiazole + ATP = 4-methyl-5-(2-phosphooxyethyl)-thiazole + ADP + H(+). It participates in cofactor biosynthesis; thiamine diphosphate biosynthesis; 4-methyl-5-(2-phosphoethyl)-thiazole from 5-(2-hydroxyethyl)-4-methylthiazole: step 1/1. Its function is as follows. Catalyzes the phosphorylation of the hydroxyl group of 4-methyl-5-beta-hydroxyethylthiazole (THZ). In Latilactobacillus sakei subsp. sakei (strain 23K) (Lactobacillus sakei subsp. sakei), this protein is Hydroxyethylthiazole kinase.